A 51-amino-acid chain; its full sequence is Large ribosomal subunit protein eL39 (51 aa).

Residues 1–22 (MAAQKSFRIKQKMAKAKKQNRP) are disordered. The span at 7–20 (FRIKQKMAKAKKQN) shows a compositional bias: basic residues.

The protein belongs to the eukaryotic ribosomal protein eL39 family. In terms of assembly, component of the large ribosomal subunit (LSU). Mature yeast ribosomes consist of a small (40S) and a large (60S) subunit. The 40S small subunit contains 1 molecule of ribosomal RNA (18S rRNA) and 33 different proteins (encoded by 57 genes). The large 60S subunit contains 3 rRNA molecules (25S, 5.8S and 5S rRNA) and 46 different proteins (encoded by 81 genes). eL39 interacts with YIH1.

It is found in the cytoplasm. Functionally, component of the ribosome, a large ribonucleoprotein complex responsible for the synthesis of proteins in the cell. The small ribosomal subunit (SSU) binds messenger RNAs (mRNAs) and translates the encoded message by selecting cognate aminoacyl-transfer RNA (tRNA) molecules. The large subunit (LSU) contains the ribosomal catalytic site termed the peptidyl transferase center (PTC), which catalyzes the formation of peptide bonds, thereby polymerizing the amino acids delivered by tRNAs into a polypeptide chain. The nascent polypeptides leave the ribosome through a tunnel in the LSU and interact with protein factors that function in enzymatic processing, targeting, and the membrane insertion of nascent chains at the exit of the ribosomal tunnel. This chain is Large ribosomal subunit protein eL39, found in Saccharomyces cerevisiae (strain ATCC 204508 / S288c) (Baker's yeast).